Consider the following 249-residue polypeptide: Homeobox protein TGIF2LX (249 aa).

Disordered stretches follow at residues Met1 to Pro65 and Asp126 to Lys199. Residues Ala9 to Pro27 are compositionally biased toward basic and acidic residues. Residues Ala28–Asp46 show a composition bias toward polar residues. Positions Glu55–Asp118 form a DNA-binding region, homeobox; TALE-type. The segment covering Asp159–Gly172 has biased composition (polar residues).

The protein belongs to the TALE/TGIF homeobox family.

Its subcellular location is the nucleus. May have a transcription role in testis. In Macaca mulatta (Rhesus macaque), this protein is Homeobox protein TGIF2LX (TGIF2LX).